The sequence spans 273 residues: Thiazole synthase (273 aa).

The active-site Schiff-base intermediate with DXP is the lysine 110. 1-deoxy-D-xylulose 5-phosphate-binding positions include glycine 171, 198-199, and 220-221; these read AG and NS.

Belongs to the ThiG family. As to quaternary structure, homotetramer. Forms heterodimers with either ThiH or ThiS.

Its subcellular location is the cytoplasm. It carries out the reaction [ThiS sulfur-carrier protein]-C-terminal-Gly-aminoethanethioate + 2-iminoacetate + 1-deoxy-D-xylulose 5-phosphate = [ThiS sulfur-carrier protein]-C-terminal Gly-Gly + 2-[(2R,5Z)-2-carboxy-4-methylthiazol-5(2H)-ylidene]ethyl phosphate + 2 H2O + H(+). Its pathway is cofactor biosynthesis; thiamine diphosphate biosynthesis. Functionally, catalyzes the rearrangement of 1-deoxy-D-xylulose 5-phosphate (DXP) to produce the thiazole phosphate moiety of thiamine. Sulfur is provided by the thiocarboxylate moiety of the carrier protein ThiS. In vitro, sulfur can be provided by H(2)S. The protein is Thiazole synthase of Hydrogenovibrio crunogenus (strain DSM 25203 / XCL-2) (Thiomicrospira crunogena).